The chain runs to 776 residues: Meiotic expression up-regulated protein 1/2 (776 aa).

Coiled-coil stretches lie at residues 87–122, 173–227, 265–307, 362–430, and 496–595; these read YVLK…AQEE, FSEL…DLKE, YKVE…NDEE, KMSQ…RNNS, and INNQ…NTEL.

This is Meiotic expression up-regulated protein 1/2 (meu1) from Schizosaccharomyces pombe (strain 972 / ATCC 24843) (Fission yeast).